Reading from the N-terminus, the 50-residue chain is C-C motif chemokine 5 (50 aa).

This sequence belongs to the intercrine beta (chemokine CC) family.

It is found in the secreted. Its function is as follows. Chemoattractant for blood monocytes, memory T-helper cells and eosinophils. Causes the release of histamine from basophils and activates eosinophils. May activate several chemokine receptors including CCR1, CCR3, CCR4 and CCR5. May also be an agonist of the G protein-coupled receptor GPR75. Together with GPR75, may play a role in neuron survival through activation of a downstream signaling pathway involving the PI3, Akt and MAP kinases. By activating GPR75 may also play a role in insulin secretion by islet cells. This is C-C motif chemokine 5 (CCL5) from Sus scrofa (Pig).